A 107-amino-acid chain; its full sequence is MAEFSFSDLEAIIRDRAHSGDPDSWTAKLFARGIDKAAQKLGEEAVETAIAAVKGDRQGLVSESADLIYHWLVVLGLSGVPLSDVLKELESRTGRSGIAEKASRPKG.

This sequence belongs to the PRA-PH family.

It localises to the cytoplasm. It catalyses the reaction 1-(5-phospho-beta-D-ribosyl)-ATP + H2O = 1-(5-phospho-beta-D-ribosyl)-5'-AMP + diphosphate + H(+). It functions in the pathway amino-acid biosynthesis; L-histidine biosynthesis; L-histidine from 5-phospho-alpha-D-ribose 1-diphosphate: step 2/9. The polypeptide is Phosphoribosyl-ATP pyrophosphatase (hisE) (Mesorhizobium japonicum (strain LMG 29417 / CECT 9101 / MAFF 303099) (Mesorhizobium loti (strain MAFF 303099))).